A 39-amino-acid polypeptide reads, in one-letter code: Cytochrome b559 subunit beta (39 aa).

A helical transmembrane segment spans residues W14–S30. H18 serves as a coordination point for heme.

Belongs to the PsbE/PsbF family. In terms of assembly, heterodimer of an alpha subunit and a beta subunit. PSII is composed of 1 copy each of membrane proteins PsbA, PsbB, PsbC, PsbD, PsbE, PsbF, PsbH, PsbI, PsbJ, PsbK, PsbL, PsbM, PsbT, PsbX, PsbY, PsbZ, Psb30/Ycf12, at least 3 peripheral proteins of the oxygen-evolving complex and a large number of cofactors. It forms dimeric complexes. Requires heme b as cofactor.

It localises to the plastid. It is found in the chloroplast thylakoid membrane. Its function is as follows. This b-type cytochrome is tightly associated with the reaction center of photosystem II (PSII). PSII is a light-driven water:plastoquinone oxidoreductase that uses light energy to abstract electrons from H(2)O, generating O(2) and a proton gradient subsequently used for ATP formation. It consists of a core antenna complex that captures photons, and an electron transfer chain that converts photonic excitation into a charge separation. This Cedrus deodara (Deodar cedar) protein is Cytochrome b559 subunit beta.